The sequence spans 296 residues: uncharacterized protein (296 aa).

2 CBS domains span residues 176–232 (GIKE…DKKV) and 236–292 (MRRD…KFPE).

This is an uncharacterized protein from Methanocaldococcus jannaschii (strain ATCC 43067 / DSM 2661 / JAL-1 / JCM 10045 / NBRC 100440) (Methanococcus jannaschii).